A 382-amino-acid chain; its full sequence is Mannitol-1-phosphate 5-dehydrogenase (382 aa).

3-14 is an NAD(+) binding site; that stretch reads ALHFGAGNIGRG.

Belongs to the mannitol dehydrogenase family.

It catalyses the reaction D-mannitol 1-phosphate + NAD(+) = beta-D-fructose 6-phosphate + NADH + H(+). In Salmonella paratyphi A (strain ATCC 9150 / SARB42), this protein is Mannitol-1-phosphate 5-dehydrogenase.